Here is a 340-residue protein sequence, read N- to C-terminus: Glycerol-3-phosphate dehydrogenase [NAD(P)+] (340 aa).

Ser14, Trp15, and Lys109 together coordinate NADPH. Residues Lys109, Gly140, and Ser142 each contribute to the sn-glycerol 3-phosphate site. NADPH is bound at residue Ala144. Sn-glycerol 3-phosphate-binding residues include Lys195, Asp248, Ser258, Arg259, and Asn260. Lys195 (proton acceptor) is an active-site residue. Position 259 (Arg259) interacts with NADPH. NADPH is bound by residues Val283 and Glu285.

This sequence belongs to the NAD-dependent glycerol-3-phosphate dehydrogenase family.

The protein localises to the cytoplasm. It carries out the reaction sn-glycerol 3-phosphate + NAD(+) = dihydroxyacetone phosphate + NADH + H(+). The catalysed reaction is sn-glycerol 3-phosphate + NADP(+) = dihydroxyacetone phosphate + NADPH + H(+). Its pathway is membrane lipid metabolism; glycerophospholipid metabolism. Catalyzes the reduction of the glycolytic intermediate dihydroxyacetone phosphate (DHAP) to sn-glycerol 3-phosphate (G3P), the key precursor for phospholipid synthesis. This is Glycerol-3-phosphate dehydrogenase [NAD(P)+] from Syntrophobacter fumaroxidans (strain DSM 10017 / MPOB).